A 126-amino-acid chain; its full sequence is Glycine cleavage system H protein (126 aa).

The 83-residue stretch at 22 to 104 folds into the Lipoyl-binding domain; that stretch reads IAYVGITDYA…YGKGWLIKIK (83 aa). Residue Lys63 is modified to N6-lipoyllysine.

It belongs to the GcvH family. The glycine cleavage system is composed of four proteins: P, T, L and H. (R)-lipoate is required as a cofactor.

In terms of biological role, the glycine cleavage system catalyzes the degradation of glycine. The H protein shuttles the methylamine group of glycine from the P protein to the T protein. This chain is Glycine cleavage system H protein, found in Phocaeicola vulgatus (strain ATCC 8482 / DSM 1447 / JCM 5826 / CCUG 4940 / NBRC 14291 / NCTC 11154) (Bacteroides vulgatus).